The following is a 105-amino-acid chain: MHGKVPTLQEVILELAPQTEIDLQCNEQLDSSEDEDEDEIDHLLERPQQARQAEQHKCYLIHVPCCKCELVVQLDIQSTKEELRVVQQLLMGALTVTCPLCASSK.

The E7 terminal domain stretch occupies residues 1 to 45; that stretch reads MHGKVPTLQEVILELAPQTEIDLQCNEQLDSSEDEDEDEIDHLLE. Residues 23 to 27 carry the LXCXE motif; interaction with host RB1 and TMEM173/STING motif; it reads LQCNE. The segment at 65 to 101 is a zinc-finger region; that stretch reads CCKCELVVQLDIQSTKEELRVVQQLLMGALTVTCPLC. The Nuclear export signal signature appears at 83–91; the sequence is LRVVQQLLM.

Belongs to the papillomaviridae E7 protein family. Homodimer. Homooligomer. Interacts with host RB1; this interaction induces dissociation of RB1-E2F1 complex thereby disrupting RB1 activity. Interacts with host EP300; this interaction represses EP300 transcriptional activity. Interacts with protein E2; this interaction inhibits E7 oncogenic activity. Interacts with host TMEM173/STING; this interaction impairs the ability of TMEM173/STING to sense cytosolic DNA and promote the production of type I interferon (IFN-alpha and IFN-beta). Post-translationally, highly phosphorylated.

The protein resides in the host cytoplasm. It is found in the host nucleus. Plays a role in viral genome replication by driving entry of quiescent cells into the cell cycle. Stimulation of progression from G1 to S phase allows the virus to efficiently use the cellular DNA replicating machinery to achieve viral genome replication. E7 protein has both transforming and trans-activating activities. Induces the disassembly of the E2F1 transcription factor from RB1, with subsequent transcriptional activation of E2F1-regulated S-phase genes. Interferes with host histone deacetylation mediated by HDAC1 and HDAC2, leading to transcription activation. Also plays a role in the inhibition of both antiviral and antiproliferative functions of host interferon alpha. Interaction with host TMEM173/STING impairs the ability of TMEM173/STING to sense cytosolic DNA and promote the production of type I interferon (IFN-alpha and IFN-beta). The chain is Protein E7 from Homo sapiens (Human).